A 363-amino-acid polypeptide reads, in one-letter code: Cobalt-precorrin-5B C(1)-methyltransferase (363 aa).

It belongs to the CbiD family.

The catalysed reaction is Co-precorrin-5B + S-adenosyl-L-methionine = Co-precorrin-6A + S-adenosyl-L-homocysteine. Its pathway is cofactor biosynthesis; adenosylcobalamin biosynthesis; cob(II)yrinate a,c-diamide from sirohydrochlorin (anaerobic route): step 6/10. Catalyzes the methylation of C-1 in cobalt-precorrin-5B to form cobalt-precorrin-6A. The chain is Cobalt-precorrin-5B C(1)-methyltransferase from Treponema denticola (strain ATCC 35405 / DSM 14222 / CIP 103919 / JCM 8153 / KCTC 15104).